The following is a 355-amino-acid chain: Nuclear speckle splicing regulatory protein 1 homolog (355 aa).

Residues 1–57 (MSGTGFRYGLNVMKKKKPNESSNRITFTEDDSSSSEQEHAPIPNSFSSQITAASDAS) form a disordered region. The span at 44-54 (NSFSSQITAAS) shows a compositional bias: polar residues. Positions 99-162 (MENLIESAKK…EDRKEEDEKS (64 aa)) form a coiled coil. 2 disordered regions span residues 253-292 (SANN…HGTY) and 325-355 (KIHA…ATNP). Positions 280–289 (YHQDRPDKRH) are enriched in basic and acidic residues. Residues 293–326 (SLEEIDKQRKEFENRQRLQKEKEFQKSREAALKI) are a coiled coil. A compositionally biased stretch (polar residues) spans 329 to 339 (SRNTTETQVQS). Basic residues predominate over residues 346–355 (QRKKKAATNP).

Belongs to the NSRP1 family.

This is Nuclear speckle splicing regulatory protein 1 homolog from Schizosaccharomyces pombe (strain 972 / ATCC 24843) (Fission yeast).